A 126-amino-acid polypeptide reads, in one-letter code: uncharacterized protein (126 aa).

The disordered stretch occupies residues 83–126 (VPPPLDRSHESPEEFFPPQNRNRGGGPKAQIQRHPPEALEKTTH). Residues 116–126 (HPPEALEKTTH) show a composition bias toward basic and acidic residues.

This is an uncharacterized protein from Galliformes (FAdV-1).